The chain runs to 158 residues: Large ribosomal subunit protein uL16 (158 aa).

It belongs to the universal ribosomal protein uL16 family. Part of the 50S ribosomal subunit.

In terms of biological role, binds 23S rRNA and is also seen to make contacts with the A and possibly P site tRNAs. This is Large ribosomal subunit protein uL16 from Synechococcus sp. (strain CC9605).